The primary structure comprises 77 residues: Sec-independent protein translocase protein TatA (77 aa).

Residues 1 to 21 (MGGLSIWHWLIVLLIVALVFG) form a helical membrane-spanning segment. The segment at 43–77 (MKESEAPADAQQLPRSGSVNVDAKDAARSSDSNKA) is disordered. Residues 64–77 (DAKDAARSSDSNKA) show a composition bias toward basic and acidic residues.

It belongs to the TatA/E family. As to quaternary structure, the Tat system comprises two distinct complexes: a TatABC complex, containing multiple copies of TatA, TatB and TatC subunits, and a separate TatA complex, containing only TatA subunits. Substrates initially bind to the TatABC complex, which probably triggers association of the separate TatA complex to form the active translocon.

The protein resides in the cell inner membrane. Its function is as follows. Part of the twin-arginine translocation (Tat) system that transports large folded proteins containing a characteristic twin-arginine motif in their signal peptide across membranes. TatA could form the protein-conducting channel of the Tat system. The protein is Sec-independent protein translocase protein TatA of Burkholderia mallei (strain NCTC 10247).